The chain runs to 201 residues: LIM domain-containing protein PLIM2b (201 aa).

LIM zinc-binding domains are found at residues 8–68 (DKCT…LFKE) and 103–163 (DKCA…LFME). The interval 171 to 201 (KKKSESQEVLPEVVPEEQPAPPPPDENREDN) is disordered. Residues 177-187 (QEVLPEVVPEE) are compositionally biased toward low complexity.

In terms of assembly, interacts with NEK3.

The protein is LIM domain-containing protein PLIM2b of Oryza sativa subsp. japonica (Rice).